The chain runs to 396 residues: Tryptophan synthase beta chain (396 aa).

The residue at position 86 (Lys86) is an N6-(pyridoxal phosphate)lysine.

Belongs to the TrpB family. Tetramer of two alpha and two beta chains. Requires pyridoxal 5'-phosphate as cofactor.

The enzyme catalyses (1S,2R)-1-C-(indol-3-yl)glycerol 3-phosphate + L-serine = D-glyceraldehyde 3-phosphate + L-tryptophan + H2O. Its pathway is amino-acid biosynthesis; L-tryptophan biosynthesis; L-tryptophan from chorismate: step 5/5. Functionally, the beta subunit is responsible for the synthesis of L-tryptophan from indole and L-serine. This chain is Tryptophan synthase beta chain, found in Serratia proteamaculans (strain 568).